Consider the following 283-residue polypeptide: Cardiolipin synthase (CMP-forming) (283 aa).

Transmembrane regions (helical) follow at residues 83 to 103, 155 to 175, and 209 to 229; these read PFIG…LFAF, VSIA…ALFI, and LSKW…LLLL.

This sequence belongs to the CDP-alcohol phosphatidyltransferase class-I family. As to quaternary structure, may be found in a large complex. Mg(2+) serves as cofactor.

Its subcellular location is the mitochondrion inner membrane. It carries out the reaction a CDP-1,2-diacyl-sn-glycerol + a 1,2-diacyl-sn-glycero-3-phospho-(1'-sn-glycerol) = a cardiolipin + CMP + H(+). Catalyzes the synthesis of cardiolipin (CL) (diphosphatidylglycerol) by specifically transferring a phosphatidyl group from CDP-diacylglycerol to phosphatidylglycerol (PG). CL is a key phospholipid in mitochondrial membranes and plays important roles in maintaining the functional integrity and dynamics of mitochondria under both optimal and stress conditions. The protein is Cardiolipin synthase (CMP-forming) (CRD1) of Saccharomyces cerevisiae (strain ATCC 204508 / S288c) (Baker's yeast).